The following is a 466-amino-acid chain: Vimentin (466 aa).

2 stretches are compositionally biased toward low complexity: residues 1–13 (MSTRSVSSSSYRR) and 20–33 (TSSRPSSNRSYVTT). The interval 1 to 33 (MSTRSVSSSSYRRMFGGSGTSSRPSSNRSYVTT) is disordered. Serine 2 is modified (N-acetylserine). The interval 2-95 (STRSVSSSSY…FSLADAINTE (94 aa)) is head. Serine 5 bears the Phosphoserine mark. Serine 7 is modified (phosphoserine; by PKA and PKC; alternate). Residue serine 7 is glycosylated (O-linked (GlcNAc) serine; alternate). Serine 8 carries the phosphoserine modification. 2 positions are modified to phosphoserine; by PKC: serine 9 and serine 10. Phosphothreonine is present on threonine 20. Phosphoserine occurs at positions 25 and 26. Threonine 33 carries an O-linked (GlcNAc) threonine glycan. O-linked (GlcNAc) serine; alternate glycosylation is present at serine 34. The residue at position 34 (serine 34) is a Phosphoserine; by PKC; alternate. Serine 39 carries the phosphoserine; by CaMK2, PKA, PKC and ROCK2 modification. Serine 42 carries the phosphoserine; by PKC modification. Serine 47 is modified (phosphoserine; by PKA). 2 positions are modified to phosphoserine: serine 49 and serine 51. A Phosphotyrosine modification is found at tyrosine 53. Serine 55 and serine 56 each carry phosphoserine. A Phosphotyrosine modification is found at tyrosine 61. Serine 66 bears the Phosphoserine; by PKA and PKC mark. Serine 72 is subject to Phosphoserine; by AURKB and ROCK2. A phosphoserine mark is found at serine 73, serine 83, and serine 87. A coil 1A region spans residues 96–131 (FKNTRTNEKVELQELNDRFANYIDKVRFLEQQNKIL). Residues 96–131 (FKNTRTNEKVELQELNDRFANYIDKVRFLEQQNKIL) adopt a coiled-coil conformation. One can recognise an IF rod domain in the interval 103-411 (EKVELQELND…KLLEGEESRI (309 aa)). Lysine 104 participates in a covalent cross-link: Glycyl lysine isopeptide (Lys-Gly) (interchain with G-Cter in SUMO2). A Phosphotyrosine modification is found at tyrosine 117. An N6-acetyllysine; alternate mark is found at lysine 120, lysine 129, and lysine 139. Lysine 120 and lysine 129 each carry N6-succinyllysine; alternate. Glycyl lysine isopeptide (Lys-Gly) (interchain with G-Cter in SUMO2); alternate cross-links involve residues lysine 120, lysine 129, and lysine 139. The linker 1 stretch occupies residues 132 to 153 (LAELEQLKGQGKSRLGDLYEEE). A Phosphoserine modification is found at serine 144. Residues 154 to 245 (MRELRRQVDQ…KLHDEEIQEL (92 aa)) adopt a coiled-coil conformation. The segment at 154-245 (MRELRRQVDQ…KLHDEEIQEL (92 aa)) is coil 1B. The residue at position 168 (lysine 168) is an N6-acetyllysine. Position 188 is an N6-acetyllysine; alternate (lysine 188). At lysine 188 the chain carries N6-succinyllysine; alternate. Serine 214 is modified (phosphoserine). An N6-acetyllysine; alternate modification is found at lysine 223. A Glycyl lysine isopeptide (Lys-Gly) (interchain with G-Cter in SUMO2); alternate cross-link involves residue lysine 223. Phosphoserine is present on serine 226. Lysine 235 carries the N6-acetyllysine modification. Residues 246–268 (QAQIQEQHVQIDVDVSKPDLTAA) are linker 12. Lysine 262 is covalently cross-linked (Glycyl lysine isopeptide (Lys-Gly) (interchain with G-Cter in SUMO2)). The coil 2 stretch occupies residues 269–407 (LRDVRQQYES…ATYRKLLEGE (139 aa)). Lysine 294 is modified (N6-acetyllysine; alternate). The residue at position 294 (lysine 294) is an N6-succinyllysine; alternate. Lysine 294 is covalently cross-linked (Glycyl lysine isopeptide (Lys-Gly) (interchain with G-Cter in SUMO2); alternate). Serine 299 is subject to Phosphoserine. Residues 303–407 (NRNNDALRQA…ATYRKLLEGE (105 aa)) adopt a coiled-coil conformation. Lysine 313 participates in a covalent cross-link: Glycyl lysine isopeptide (Lys-Gly) (interchain with G-Cter in SUMO2). The residue at position 325 (serine 325) is a Phosphoserine. Residues 326–329 (LTCE) carry the [IL]-x-C-x-x-[DE] motif motif. Residue lysine 373 is modified to N6-acetyllysine; alternate. A Glycyl lysine isopeptide (Lys-Gly) (interchain with G-Cter in SUMO2); alternate cross-link involves residue lysine 373. The tract at residues 408 to 466 (ESRISLPLPNFSSLNLRETNLESLPLVDTHSKRTLLIKTVETRDGQVINETSQHHDDLE) is tail. 4 positions are modified to phosphoserine: serine 409, serine 412, serine 419, and serine 420. At threonine 426 the chain carries Phosphothreonine. Serine 430 is modified (phosphoserine). Threonine 436 is subject to Phosphothreonine. Phosphoserine is present on serine 438. Lysine 439 is covalently cross-linked (Glycyl lysine isopeptide (Lys-Gly) (interchain with G-Cter in SUMO2)). Residue lysine 445 is modified to N6-acetyllysine; alternate. Lysine 445 is subject to N6-succinyllysine; alternate. A Glycyl lysine isopeptide (Lys-Gly) (interchain with G-Cter in SUMO2); alternate cross-link involves residue lysine 445. Residue lysine 445 forms a Glycyl lysine isopeptide (Lys-Gly) (interchain with G-Cter in SUMO1); alternate linkage. Threonine 446 and threonine 458 each carry phosphothreonine. The residue at position 459 (serine 459) is a Phosphoserine.

Belongs to the intermediate filament family. Homomer assembled from elementary dimers. Identified in complexes that contain VIM, EZR, AHNAK, BFSP1, BFSP2, ANK2, PLEC, PRX and spectrin. Interacts with BCAS3. Interacts with LGSN. Interacts with SYNM. Interacts (via rod region) with PLEC (via CH 1 domain). Interacts with STK33. Interacts with LARP6. Interacts with RAB8B. Interacts with TOR1A; the interaction associates TOR1A with the cytoskeleton. Interacts with TOR1AIP1. Interacts with TOR1AIP1. Interacts with DIAPH1. Interacts with EPPK1; interaction is dependent of higher-order structure of intermediate filament. Interacts with the non-receptor tyrosine kinase SRMS; the interaction leads to phosphorylation of VIM. Interacts with NOD2. Interacts (via head region) with CORO1C. Interacts with HDGF. Interacts with PRKCE (via phorbol-ester/DAG-type 2 domain). Interacts with BFSP2. Interacts with PPL. Interacts with PKP1 and PKP2. Interacts with SCRIB (via PDZ domains); the interaction protects SCRIB from proteasomal degradation and facilitates SCRIB localization to intermediate filaments, the interaction is reduced by cell contact inhibition. Post-translationally, one of the most prominent phosphoproteins in various cells of mesenchymal origin. Phosphorylation is enhanced during cell division, at which time vimentin filaments are significantly reorganized. Phosphorylation by PKN1 inhibits the formation of filaments. Filament disassembly during mitosis is promoted by phosphorylation at Ser-55 as well as by nestin. Phosphorylated at Ser-56 by CDK5 during neutrophil secretion in the cytoplasm. Phosphorylated by STK33. Phosphorylated on tyrosine residues by SRMS. In terms of processing, S-nitrosylation is induced by interferon-gamma and oxidatively-modified low-densitity lipoprotein (LDL(ox)) possibly implicating the iNOS-S100A8/9 transnitrosylase complex.

The protein localises to the cytoplasm. It is found in the cytoskeleton. It localises to the nucleus matrix. Its subcellular location is the cell membrane. In terms of biological role, vimentins are class-III intermediate filaments found in various non-epithelial cells, especially mesenchymal cells. Vimentin is attached to the nucleus, endoplasmic reticulum, and mitochondria, either laterally or terminally. Plays a role in cell directional movement, orientation, cell sheet organization and Golgi complex polarization at the cell migration front. Protects SCRIB from proteasomal degradation and facilitates its localization to intermediate filaments in a cell contact-mediated manner. Its function is as follows. Involved with LARP6 in the stabilization of type I collagen mRNAs for CO1A1 and CO1A2. This chain is Vimentin, found in Rattus norvegicus (Rat).